A 301-amino-acid chain; its full sequence is Protein ARMCX6 (301 aa).

The mitochondrion outer membrane (MOM)-targeting sequence stretch occupies residues 1-6 (MGRARE). Residues 1 to 7 (MGRAREM) are Mitochondrial intermembrane-facing. Residues 8-25 (GWMAAGLMIGAGACYCMY) form a helical; Signal-anchor membrane-spanning segment. Residues 26–36 (KLTMGRSEGNE) form a mitochondrion outer membrane (MOM)-targeting sequence region. The Cytoplasmic portion of the chain corresponds to 26–301 (KLTMGRSEGN…REMLVEAISP (276 aa)). Residues 69 to 101 (WSEDGDWDEPGAPGGTEDRRSGGGKANRAHPIK) form a disordered region.

It belongs to the eutherian X-chromosome-specific Armcx family. Highly expressed in the developing neural tissues, neural crest derivatives and hind limbs. Also widely expressed in the adult nervous tissue, especially in the forebrain, including the cerebral cortex, hippocampus and thalamus.

It localises to the mitochondrion. The protein localises to the mitochondrion outer membrane. In terms of biological role, may regulate the dynamics and distribution of mitochondria in neural cells. The sequence is that of Protein ARMCX6 (Armcx6) from Mus musculus (Mouse).